A 515-amino-acid polypeptide reads, in one-letter code: Mucin-like protein Glc1.8a (515 aa).

The N-terminal stretch at 1–20 (MSQITLIILILAIGFSCTKS) is a signal peptide. At 21–467 (HPINSTRDGE…ANDIKKPAFP (447 aa)) the chain is on the extracellular side. N-linked (GlcNAc...) asparagine; by host glycosylation is found at Asn-24, Asn-45, Asn-51, Asn-60, Asn-85, Asn-93, Asn-102, Asn-123, Asn-129, Asn-138, Asn-180, Asn-201, Asn-207, Asn-216, Asn-258, Asn-279, Asn-285, Asn-319, Asn-327, Asn-336, Asn-357, Asn-363, Asn-372, Asn-397, Asn-405, Asn-413, Asn-434, and Asn-441. The disordered stretch occupies residues 80–114 (SKKDENITGQSEINTSAKSQPINSTRDGEDSGTDL). Residues 86 to 104 (ITGQSEINTSAKSQPINST) are compositionally biased toward polar residues. Residues 314–358 (SKKDENVTGQSEINTSAKSQPINSTRDGEDSGTDLKNLLTDPANT) form a disordered region. Residues 320–338 (VTGQSEINTSAKSQPINST) show a composition bias toward polar residues. The tract at residues 393-413 (RKDENVTGQSEFNISTNSNLN) is disordered. The helical transmembrane segment at 468–488 (YCIILITFQIVTVGMIIYLVF) threads the bilayer. Over 489-515 (RTMRKPCQSERAIPLNTFGFGNNSSHE) the chain is Cytoplasmic.

It belongs to the polydnaviridae Glc1.8 protein family.

The protein localises to the host membrane. Functionally, involved in suppression of the insect cellular immune response. Inhibits host hemocyte adhesion and phagocytosis. This is Mucin-like protein Glc1.8a (O9) from Microplitis demolitor (Parasitoid wasp).